Reading from the N-terminus, the 910-residue chain is MDGNDINIQKNEFSRDQSALLMMDQHSDHKNHESAIGEPGMSYTASQPALSSTEHQTPLVSEASVAAPQNHLNGNSHESVSEMDRNSVDFAIESVLMKARAYNKMGAPKDPRRKQHNPKSEPKIEPHVTDSSDNQAAMSNKMEAEAPKMESNQNYVSNGSEPPFRFVSISNFDEMKTKKKEVQEELKLEVDSDSEEDDVPEQKTPKESDRCGGCGKFTHEDDLIALEEEKKKEKEKPLMSKKKSHHHKKNDFQWIGCDSCQTWYHFLCSGLEQFEYYLYEKFFCPKCVPHTGHSIRYKVVAPHRYRWYSPNEKHLGIEVGSKTWIEDFITRENTVPSPTDDEVCIVEDGYEFRREFEKLGGADNWGKVFMVKDMDGLNMTMPKPGFDLEDVVKIMGSDYEVDTIDVYNQSTYSMKLDTFRKLFRDTKNRPLLYNFLSLEFSDNNEMKEIAKPPRFVQEISMVNRLWPDVSGAEYIKLLQREEYLPEDQRPKVEQFCLAGMAGSYTDFHVDFGGSSVYYHILKGEKIFYIAAPTEQNFAAYQAHETSPDTTTWFGDIANGAVKRVVIKEGQTLLIPAGWIHAVLTPVDSLVFGGNFLHLGNLEMQMRVYHLENAIRKEIRSEEKFYFPNFELLHWMYMRNVLLEKITEANQEGSDMREQEKNIWTASQIMKAEMERWMDRELRLGPEKNAILPTDDKNKIMISVRKQIEIQTKIQNAKNKPMGLKQKRKSRESAERDDEDYCPSSSTAYKKKYTKKAKKDNDDAPKVKKAKKEEVPEEKVPVPEAAGPSEVTAPLTIKIGMGPTEDQKGVVQIFNNQCTSSGRKVKLNQNVADYCGSHLEARVEEIPEKATKSFRELDNELERCEAVHSGEKIKKVKEPKPPKQPKEKKEKPPPKKKEMSSRDRLMKKLKM.

Over residues 1-11 the composition is skewed to polar residues; it reads MDGNDINIQKN. Disordered regions lie at residues 1-58, 103-162, and 183-212; these read MDGN…HQTP, NKMG…GSEP, and QEEL…DRCG. Residues 25-35 are compositionally biased toward basic and acidic residues; the sequence is QHSDHKNHESA. The segment covering 43–58 has biased composition (polar residues); sequence YTASQPALSSTEHQTP. Over residues 118-130 the composition is skewed to basic and acidic residues; the sequence is PKSEPKIEPHVTD. Residues 150-160 are compositionally biased toward polar residues; sequence ESNQNYVSNGS. Positions 200–210 are enriched in basic and acidic residues; the sequence is PEQKTPKESDR. The PHD-type zinc-finger motif lies at 208-290; the sequence is SDRCGGCGKF…KFFCPKCVPH (83 aa). In terms of domain architecture, JmjC spans 441-612; it reads SDNNEMKEIA…MQMRVYHLEN (172 aa). Residues 505–510, Tyr518, Lys525, and His580 contribute to the substrate site; that span reads TDFHVD. His508 and Asp510 together coordinate Fe cation. His580 lines the Fe cation pocket. 2 disordered regions span residues 712-790 and 864-910; these read KIQN…PSEV and EAVH…KLKM. The span at 748–757 shows a compositional bias: basic residues; that stretch reads YKKKYTKKAK. Positions 758 to 780 are enriched in basic and acidic residues; it reads KDNDDAPKVKKAKKEEVPEEKVP.

Belongs to the JHDM1 histone demethylase family. JHDM1D subfamily. Requires Fe(2+) as cofactor. In terms of tissue distribution, mainly expressed in neurons. Also weakly expressed in some muscle, intestinal and hypodermal cells.

The protein localises to the nucleus. Competitively inhibited by 2-hydroxyglutarate. Its function is as follows. Histone demethylase required for nervous system development. Specifically demethylates dimethylated 'Lys-9', 'Lys-23' and 'Lys-27' (H3K9me2, H3K23me2 and H3K27me2, respectively) of histone H3, thereby playing a central role in histone code. Promotes mitochondrial stress-induced longevity. In Caenorhabditis elegans, this protein is Lysine-specific demethylase 7 homolog (jmjd-1.2).